The sequence spans 979 residues: Receptor-type tyrosine-protein phosphatase-like N (979 aa).

Positions 1-34 are cleaved as a signal peptide; the sequence is MRRPRRPGGLGGSGGLRLLLCLLLLSSRPGGCSA. The RESP18 homology domain stretch occupies residues 35–131; sequence VSAHGCLFDR…RPRDRSGLAP (97 aa). The Lumenal segment spans residues 35 to 575; it reads VSAHGCLFDR…QTAHSTSPMR (541 aa). Residues cysteine 53 and cysteine 62 are joined by a disulfide bond. 2 stretches are compositionally biased toward basic and acidic residues: residues 112-127 and 304-323; these read RIPR…RDRS and RAED…RGEK. 3 disordered regions span residues 112 to 173, 289 to 329, and 393 to 439; these read RIPR…SSSL, SRAR…SPAV, and VEGR…ARPP. A Phosphoserine modification is found at serine 308. Low complexity predominate over residues 415–433; the sequence is SPTSSEVQQVPSPVSSEPP. The O-linked (GalNAc...) threonine glycan is linked to threonine 441. Positions 449–575 are sufficient for dimerization of proICA512; it reads SPLGQSQPTV…QTAHSTSPMR (127 aa). N-linked (GlcNAc...) asparagine glycans are attached at residues asparagine 506 and asparagine 524. The chain crosses the membrane as a helical span at residues 576–600; it reads SVLLTLVALAGVAGLLVALAVALCV. The tract at residues 601 to 732 is sufficient for dimerization of proICA512; the sequence is RQHARQQDKE…PNTCATAQGE (132 aa). Residues 601–979 lie on the Cytoplasmic side of the membrane; it reads RQHARQQDKE…VNAILKALPQ (379 aa). The tract at residues 643–680 is disordered; it reads NRAEGPPEPSRVSSVSSQFSDAAQASPSSHSSTPSWCE. Residues 652–677 are compositionally biased toward low complexity; sequence SRVSSVSSQFSDAAQASPSSHSSTPS. A Tyrosine-protein phosphatase domain is found at 709-969; it reads LAKEWQALCA…EFALTAVAEE (261 aa). A Glycyl lysine isopeptide (Lys-Gly) (interchain with G-Cter in SUMO) cross-link involves residue lysine 754.

Belongs to the protein-tyrosine phosphatase family. Receptor class 8 subfamily. As to quaternary structure, homodimer; shown for the unprocessed protein (proICA512) in the endoplasmic reticulum and resolved during protein maturation as ICA512-TMF seems to be predominantly monomeric in secretory granules; however, ICA512-CCF interacts with ICA512-TMF disrupting the ICA512-TMF:SNTB2 complex. The isolated lumenal RESP18 homology domain has been shown to form disulfide-linked homooligomers. Interacts (via cytoplasmic domain) with phosphorylated SNTB2; this protects PTPRN against cleavage by CAPN1 to produce ICA512-CCF. Dephosphorylation of SNTB2 upon insulin stimulation disrupts the interaction and results in PTPRN cleavage. Interacts with SNX19. ICA512-CCF interacts with PIAS4; in the nucleus. Interacts with STAT5B (phosphorylated); down-regulated by ICA512-CCF sumoylation; ICA512-CCF prevents STAT5B dephosphorylation; ICA512-CCF mediates interaction of STAT5B with PIAS4. Interacts (via RESP18 homology domain) with insulin and proinsulin. Interacts with PTPRN2, PTPRA and PTPRE. In terms of processing, N-glycosylated. O-glycosylated with core 1 or possibly core 8 glycans. Post-translationally, subject to proteolytic cleavage at multiple sites. Subject to cleavage on a pair of basic residues. On exocytosis of secretory granules in pancreatic beta-cells ICA512-TMF is transiently inserted in the plasma-membrane and cleaved by mu-type calpain CPN1 to yield ICA512-CCF. In terms of processing, sumoylated at two sites including Lys-754. Sumoylation decreases interaction with STAT5. In terms of tissue distribution, expression is restricted to neuroendocrine cells. Found in pancreas, brain and pituitary.

The protein localises to the membrane. It localises to the cytoplasmic vesicle. It is found in the secretory vesicle membrane. Its subcellular location is the perikaryon. The protein resides in the cell projection. The protein localises to the axon. It localises to the synapse. It is found in the cell membrane. Its subcellular location is the endosome. The protein resides in the nucleus. Functionally, plays a role in vesicle-mediated secretory processes. Required for normal accumulation of secretory vesicles in hippocampus, pituitary and pancreatic islets. Required for the accumulation of normal levels of insulin-containing vesicles and preventing their degradation. Plays a role in insulin secretion in response to glucose stimuli. Required for normal accumulation of the neurotransmitters norepinephrine, dopamine and serotonin in the brain. In females, but not in males, required for normal accumulation and secretion of pituitary hormones, such as luteinizing hormone (LH) and follicle-stimulating hormone (FSH). Required to maintain normal levels of renin expression and renin release. Seems to lack intrinsic enzyme activity. May regulate catalytic active protein-tyrosine phosphatases such as PTPRA through dimerization. Its function is as follows. ICA512-TMF regulates dynamics and exocytosis of insulin secretory granules (SGs); binding of ICA512-TMF to SNTB2/beta-2-syntrophin is proposed to restrain SGs mobility and exocytosis by tethering them to the actin cytoskeleton depending on UTRN; the function is inhibited by cytoplasmic ICA512-CFF dimerizing with ICA512-TMF and displacing SNTB2. In terms of biological role, ICA512-CCF translocated to the nucleus promotes expression of insulin and other granule-related genes; the function implicates binding to and regulating activity of STAT5B probably by preventing its dephosphorylation and potentially by inducing its sumoylation by recruiting PIAS4. Enhances pancreatic beta-cell proliferation by converging with signaling by STAT5B and STAT3. ICA512-CCF located in the cytoplasm regulates dynamics and exocytosis of insulin secretory granules (SGs) by dimerizing with ICA512-TMF and displacing SNTB2 thus enhancing SGs mobility and exocytosis. This chain is Receptor-type tyrosine-protein phosphatase-like N (PTPRN), found in Homo sapiens (Human).